The chain runs to 914 residues: UPF0182 protein PTH_1387 (914 aa).

Transmembrane regions (helical) follow at residues 7 to 27, 48 to 68, 109 to 129, 173 to 193, 209 to 229, 252 to 272, and 281 to 301; these read FAAY…IAGA, IIIS…VLLF, LLLL…NFTV, INWV…VVYF, YHFS…YQLE, TLLA…AILI, and LVIY…GIYP.

The protein belongs to the UPF0182 family.

Its subcellular location is the cell membrane. This is UPF0182 protein PTH_1387 from Pelotomaculum thermopropionicum (strain DSM 13744 / JCM 10971 / SI).